Here is a 678-residue protein sequence, read N- to C-terminus: DNA ligase (678 aa).

NAD(+)-binding positions include 47 to 51 (DSDYD), 96 to 97 (SL), and glutamate 122. Lysine 124 (N6-AMP-lysine intermediate) is an active-site residue. Positions 145, 182, 300, and 324 each coordinate NAD(+). Zn(2+) is bound by residues cysteine 418, cysteine 421, cysteine 436, and cysteine 442. Residues 602 to 678 (AYNESFTGKT…ILEDNLKDLL (77 aa)) enclose the BRCT domain.

The protein belongs to the NAD-dependent DNA ligase family. LigA subfamily. It depends on Mg(2+) as a cofactor. The cofactor is Mn(2+).

The catalysed reaction is NAD(+) + (deoxyribonucleotide)n-3'-hydroxyl + 5'-phospho-(deoxyribonucleotide)m = (deoxyribonucleotide)n+m + AMP + beta-nicotinamide D-nucleotide.. Its function is as follows. DNA ligase that catalyzes the formation of phosphodiester linkages between 5'-phosphoryl and 3'-hydroxyl groups in double-stranded DNA using NAD as a coenzyme and as the energy source for the reaction. It is essential for DNA replication and repair of damaged DNA. This Francisella tularensis subsp. tularensis (strain SCHU S4 / Schu 4) protein is DNA ligase.